Reading from the N-terminus, the 187-residue chain is UPF0301 protein VS_2679 (187 aa).

It belongs to the UPF0301 (AlgH) family.

This is UPF0301 protein VS_2679 from Vibrio atlanticus (strain LGP32) (Vibrio splendidus (strain Mel32)).